A 662-amino-acid chain; its full sequence is ATP-dependent zinc metalloprotease FtsH (662 aa).

Basic and acidic residues predominate over residues 1–15; the sequence is MSENPVKRPGKDGSR. The disordered stretch occupies residues 1–35; it reads MSENPVKRPGKDGSRNKFKPVQEEGGTPGWFRSKG. At 1 to 39 the chain is on the cytoplasmic side; the sequence is MSENPVKRPGKDGSRNKFKPVQEEGGTPGWFRSKGESPQ. A helical membrane pass occupies residues 40 to 60; that stretch reads GKFPGFLLFLMAGLLMLFVFL. The Periplasmic segment spans residues 61–154; sequence RFFSGTDAPE…LKVEKGSSDL (94 aa). A helical transmembrane segment spans residues 155–175; that stretch reads NTFLALFAPWIIFAALYFFLF. At 176 to 662 the chain is on the cytoplasmic side; it reads RRMSGQNGAQ…QGALPNPVTA (487 aa). Residue 250–257 coordinates ATP; it reads GPPGTGKT. H472 serves as a coordination point for Zn(2+). E473 is an active-site residue. Positions 476 and 548 each coordinate Zn(2+).

The protein in the central section; belongs to the AAA ATPase family. In the C-terminal section; belongs to the peptidase M41 family. In terms of assembly, homohexamer. The cofactor is Zn(2+).

The protein localises to the cell inner membrane. Its function is as follows. Acts as a processive, ATP-dependent zinc metallopeptidase for both cytoplasmic and membrane proteins. Plays a role in the quality control of integral membrane proteins. In Pelodictyon phaeoclathratiforme (strain DSM 5477 / BU-1), this protein is ATP-dependent zinc metalloprotease FtsH.